A 325-amino-acid chain; its full sequence is Peroxidase RIP1 (325 aa).

The signal sequence occupies residues 1-21 (MASSSPCQIFLVFVMVTLVTS). Intrachain disulfides connect cysteine 38–cysteine 118, cysteine 71–cysteine 76, cysteine 125–cysteine 321, and cysteine 206–cysteine 231. The active-site Proton acceptor is the histidine 69. Aspartate 70, valine 73, glycine 75, aspartate 77, and serine 79 together coordinate Ca(2+). Residue asparagine 87 is glycosylated (N-linked (GlcNAc...) asparagine). Residue proline 169 participates in substrate binding. N-linked (GlcNAc...) asparagine glycosylation occurs at asparagine 174. Histidine 199 lines the heme b pocket. Residue threonine 200 coordinates Ca(2+). The N-linked (GlcNAc...) asparagine glycan is linked to asparagine 215. Residues aspartate 244, threonine 246, and glutamate 251 each coordinate Ca(2+).

This sequence belongs to the peroxidase family. Classical plant (class III) peroxidase subfamily. It depends on heme b as a cofactor. The cofactor is Ca(2+). Expressed in the differentiating root epidermis following inoculation with the bacterial symbiont Sinorhizobium meliloti.

The protein resides in the secreted. It catalyses the reaction 2 a phenolic donor + H2O2 = 2 a phenolic radical donor + 2 H2O. Functionally, removal of H(2)O(2), oxidation of toxic reductants, biosynthesis and degradation of lignin, suberization, auxin catabolism, response to environmental stresses such as wounding, pathogen attack and oxidative stress. These functions might be dependent on each isozyme/isoform in each plant tissue. The chain is Peroxidase RIP1 from Medicago truncatula (Barrel medic).